A 538-amino-acid chain; its full sequence is MNEEQRLGRNGNTDAVSTKEAGSATKDYSKYFDFSNAKVVSEEDGKKVIKIAGREISIFDQPDYKQGKRRGKEEVKVLRPDDLIPEDMKTIGAGKKFLVRTYGCQMNIHDSENMAGMLKEMGFEATDETTDADVILINTCAIRENAENKVFGEIGNLKQLKREKPELVIGVCGCMSQEEGVVNRIMQKHQHIDMIFGTHNIHRLPHLLRNALFGKEMIIEVWSKEGDIVENMPRAREGKTQAWVNIMYGCDKFCTYCIVPYTRGKERSRRPEDIIQEVRDLARQGYKEITLLGQNVNAYGKDLADLDYGLGDLMDEIRKIDIPRVRFTTSHPRDFDDHLIEVLAKGGNLVEHIHLPVQHGNSEILKLMARKYTREQYVELAQKIKRAIPNASFTTDLIVGFPNETDEQFEDTLSLVREIEFDSAFTYIYSPREGTPAAKMKDNVPMEVKRERLARLNALVNDISAQKNLEYQDKVVEVLVEGESKKDPNILAGRTRTNRLVNFKGPKSVIGDIVYVKVTEAKTWSLNGEMVEMAEVNG.

Residues 1–23 are disordered; that stretch reads MNEEQRLGRNGNTDAVSTKEAGS. In terms of domain architecture, MTTase N-terminal spans 95 to 213; it reads KKFLVRTYGC…LPHLLRNALF (119 aa). Residues C104, C140, C174, C250, C254, and C257 each contribute to the [4Fe-4S] cluster site. Residues 236 to 466 enclose the Radical SAM core domain; that stretch reads REGKTQAWVN…NALVNDISAQ (231 aa). In terms of domain architecture, TRAM spans 469–532; that stretch reads LEYQDKVVEV…TWSLNGEMVE (64 aa).

It belongs to the methylthiotransferase family. MiaB subfamily. In terms of assembly, monomer. Requires [4Fe-4S] cluster as cofactor.

The protein resides in the cytoplasm. It carries out the reaction N(6)-dimethylallyladenosine(37) in tRNA + (sulfur carrier)-SH + AH2 + 2 S-adenosyl-L-methionine = 2-methylsulfanyl-N(6)-dimethylallyladenosine(37) in tRNA + (sulfur carrier)-H + 5'-deoxyadenosine + L-methionine + A + S-adenosyl-L-homocysteine + 2 H(+). Its function is as follows. Catalyzes the methylthiolation of N6-(dimethylallyl)adenosine (i(6)A), leading to the formation of 2-methylthio-N6-(dimethylallyl)adenosine (ms(2)i(6)A) at position 37 in tRNAs that read codons beginning with uridine. The polypeptide is tRNA-2-methylthio-N(6)-dimethylallyladenosine synthase (Halalkalibacterium halodurans (strain ATCC BAA-125 / DSM 18197 / FERM 7344 / JCM 9153 / C-125) (Bacillus halodurans)).